A 1854-amino-acid polypeptide reads, in one-letter code: MADVDDGSELLFFDTFSHEEVTDINLDLVQFPKPVFITQVRIIPLGARVQADFPGGVRLGATNPSKFDLEFFVNDLGMPAASAFENLGLLRYNQNDCIHLDCSQEKIVTDGLVLRGWYSTITLAIYGIFTNSVTEPIASPTLPCEPVGPEIANLSGEVLLQEDVLKDEWQEPMQAELLTAHKGNVSDYDPEDMEYGMSRDHYHQHAEEQEQREMRRLRRSTHSTDHSPPPPRRSHTHSESNDREYIRCSRDKGSRDWSRSPEYSSHRSRRKRSERSRSVVDEHKWPRTPPASIDSPTRPRSPDTMDYEDEDSRSHYKMQSSHYRHSSESLHRGERDRDDEDRSCTPQEQFEPILSDDEIIGDDEEDDAVDAAAIAEYERELEAAAAAAPPAIDAFEPWQKPLLVFEGDMAAHFCKELETLKLLFKKLVLQTRCENVNAFSEEHGASVDEREQFVYLGEQLNNQLGYLAQHYKRRNFVLQQFFGNDELHLRQAANVLQIALSFQAACMQPQPAFKIRHIKLGARMAELLGSSEELFQHLLKEHKFDIFEAVFRLYHEPYMALSIKLQLLKAVYALLDTRMGIEHFMGAKNNGYQMIVEAIKTAKLTRTKYALQAIIKKLHLWEGLESVQIWCRRLFVDRIIIPGNRDQMEDTVITCQQIEFAFEMLMDALFSSQLSYLQPRRFLPVSKKFEVVTDPTAQRSFGNALQSYLGQNSLAESLLVMLANCKELPATTYLSMLDLMHTLLRSHVGIDYFVDDAFPVTQTIVAILLGLDEVPRNPEEKEEKAEKSDAEDKAMEVENEAVEAGGEKPTPPTADEEGKPVAAPISVPAPAAAPQVRPRPILRPVLPRLARLGIEMSYKVQTRYHLDAIAYAAAAPEYDAVKLATHMHAIYSQTCDPAGRQHTVEVLGLNNNLKIFMDLIKKEQRLQTQRQLSSPGTKYKSPVLSYAVDMVDACVRYCEQLDYLIEHGGVILELAKNHETFEPSVSAVLQEMYVYMKPLEAINVFVYDDIMPLVEVIGRSLDYLTTFPGDLIMAMRILRYLSISKPLAGQKAPPVTEELKHRFVALQLYAADGVQLCIQIMERLCAYFEQPGAHAPALMTIQGVHCCQIMLPTLQILRELLSYAILCRDGTYKDLTAIDHLVKVYYLLYYFPTRCQAGPEVEQCKMEVVQTLLAYTQPNEQDEESLHKSLWTLMIREVLKNVDGPAHFIPGLKLLAELLPLPLPMPQPLCDQLQQQHKQRLITERKLWSAHLHPQSGQIAKLVEALAPSSFPQLSELLQRVCMQLSDLAPNMTLLIAKTITELLCNEYQTSNCIPTTNLERLLRFSTRLCAFAPLKSSMLSILSGKFWELFQSLLALNEFNDVVSNCQEAVHRILDSFLDSGISLISHKSTASPALNLAAALPPKELIPRIIDAVFSNLTSVEVTHGISILAVRNLVILTEHDFTFYHLAQLLKQKITEFQAWMERVILHNETVEYNANIESLILLLRSLTQIEPPPAMSAMPHRTLKLGATELAQLVEFQDIELAKPPVLSRILTVMEKHKAVANEAALSDLKQLILLQASKQEILAGTSTETPPEAEGEANPSASSCSASLTVEPYLPQAEGIVTQYEARPIFTRFCATAENAQLTARYWLDPLPIELIEDMNEPIYERIACDLTDLANVCLNPDLNVAGDSKRVMNLSGSPQSNREMTPTAPCFRTRRVEVEPATGRPEKKMFVSSVRGRGFARPPPSRGDLFRSRPPNTSRPPSLHVDDFLALETCGAQPTGPTGYNKIPSMLRGSRVGRNRGSRISAAAAFRQKKMMRIGSPSSWAESPGSYRSASDSHFSSSDSHYSSPHYSGRPRGRGLRSRPSYLR.

The residue at position 186 (Ser186) is a Phosphoserine. Basic and acidic residues-rich tracts occupy residues 202-214 and 236-259; these read YHQHAEEQEQREM and THSESNDREYIRCSRDKGSRDWSR. 5 disordered regions span residues 202 to 361, 777 to 821, 1570 to 1589, 1720 to 1788, and 1804 to 1854; these read YHQH…EIIG, NPEE…GKPV, TSTETPPEAEGEANPSASSC, VRGR…NRGS, and IGSP…SYLR. 3 positions are modified to phosphoserine: Ser258, Ser260, and Ser276. The segment covering 275-285 has biased composition (basic and acidic residues); sequence RSRSVVDEHKW. Thr288 carries the phosphothreonine modification. Ser295 bears the Phosphoserine mark. The residue at position 297 (Thr297) is a Phosphothreonine. 2 positions are modified to phosphoserine: Ser301 and Ser312. 2 stretches are compositionally biased toward basic and acidic residues: residues 325 to 343 and 777 to 796; these read HSSESLHRGERDRDDEDRS and NPEEKEEKAEKSDAEDKAME. The stretch at 779-808 forms a coiled coil; it reads EEKEEKAEKSDAEDKAMEVENEAVEAGGEK. 2 stretches are compositionally biased toward low complexity: residues 1738 to 1748 and 1816 to 1838; these read SRPPNTSRPPS and SYRSASDSHFSSSDSHYSSPHYS.

Belongs to the vir family. In terms of assembly, component of the WMM complex, a N6-methyltransferase complex composed of a catalytic subcomplex, named MAC, and of an associated subcomplex, named MACOM. The MAC subcomplex is composed of Ime4/Mettl3 and Mettl14. The MACOM subcomplex is composed of fl(2)d, Flacc/Xio, Hakai, vir, and, in some cases of nito. Part of a complex containing fl(2)d, Sxl and vir.

The protein resides in the nucleus. Functionally, associated component of the WMM complex, a complex that mediates N6-methyladenosine (m6A) methylation of mRNAs, a modification that plays a role in the efficiency of mRNA splicing and is required for sex determination. Required for sex determination and dosage compensation via Sxl alternative splicing: m6A methylation acts as a key regulator of Sxl pre-mRNA and promotes female-specific alternative splicing of Sxl, which determines female physiognomy. M6A methylation is also required for neuronal functions. Required for proper inclusion of regulated exons in Ubx transcripts, leading to isoforms Ia/b and IIa/b. The protein is Protein virilizer of Drosophila melanogaster (Fruit fly).